The primary structure comprises 453 residues: MAGAGGGGCPAGGNDFQWCFSQVKGAIDEDVAEADIISTVEFNYSGDLLATGDKGGRVVIFQREQENKSRPHSRGEYNVYSTFQSHEPEFDYLKSLEIEEKINKIRWLPQQNAAHFLLSTNDKTIKLWKISERDKRAEGYNLKDEDGRLRDPFRITALRVPILKPMDLMVEASPRRIFANAHTYHINSISVNSDHETYLSADDLRINLWHLEITDRSFNIVDIKPANMEELTEVITAAEFHPHQCNVFVYSSSKGTIRLCDMRSSALCDRHSKFFEEPEDPSSRSFFSEIISSISDVKFSHSGRYMMTRDYLSVKVWDLNMESRPVETHQVHEYLRSKLCSLYENDCIFDKFECCWNGSDSAIMTGSYNNFFRMFDRDTRRDVTLEASRESSKPRASLKPRKVCTGGKRRKDEISVDSLDFNKKILHTAWHPVDNVIAVAATNNLYIFQDKIN.

4 WD repeats span residues alanine 32–proline 71, glutamate 97–glutamate 138, alanine 181–asparagine 219, and glutamate 230–arginine 270. Phosphoserine is present on serine 285. WD repeat units lie at residues glutamate 289–glutamate 327, glutamate 344–leucine 385, and aspartate 420–isoleucine 452. A Phosphotyrosine modification is found at tyrosine 305. Threonine 308 is modified (phosphothreonine).

This sequence belongs to the phosphatase 2A regulatory subunit B family. PP2A consists of a common heterodimeric core enzyme, composed of a 36 kDa catalytic subunit (subunit C) and a 65 kDa constant regulatory subunit (PR65 or subunit A), that associates with a variety of regulatory subunits. Proteins that associate with the core dimer include three families of regulatory subunits B (the R2/B/PR55/B55, R3/B''/PR72/PR130/PR59 and R5/B'/B56 families), the 48 kDa variable regulatory subunit, viral proteins, and cell signaling molecules. Interacts with ENSA (when phosphorylated at 'Ser-67') and ARPP19 (when phosphorylated at 'Ser-62'), leading to inhibit PP2A activity. Interacts with IER5.

The protein resides in the cytoplasm. Functionally, substrate-recognition subunit of protein phosphatase 2A (PP2A) that plays a key role in cell cycle by controlling mitosis entry and exit. Involved in chromosome clustering during late mitosis by mediating dephosphorylation of MKI67. The activity of PP2A complexes containing PPP2R2D (PR55-delta) fluctuate during the cell cycle: the activity is high in interphase and low in mitosis. In Homo sapiens (Human), this protein is Serine/threonine-protein phosphatase 2A 55 kDa regulatory subunit B delta isoform (PPP2R2D).